We begin with the raw amino-acid sequence, 90 residues long: Protein S100-A6 (90 aa).

2 EF-hand domains span residues 12–47 and 48–83; these read LIGI…IGSK and LQDA…LAMI. Ca(2+) is bound by residues Thr28 and Glu33. Lys40 bears the N6-acetyllysine mark. Ser46 carries the phosphoserine modification. Lys47 is modified (N6-acetyllysine; alternate). N6-succinyllysine; alternate is present on Lys47. Ca(2+)-binding residues include Asp61, Asn63, Asp65, Glu67, and Glu72.

It belongs to the S-100 family. Homodimer; head to tail assembly of 2 subunits. Interacts with CACYBP in a calcium-dependent manner. Interacts with ANXA2 and ANXA11 (via N-terminus). Interacts with SUGT1. Interacts with TP53; has higher affinity for TP53 that is phosphorylated on its N-terminal domain, and lower affinity for TP53 that is phosphorylated on its C-terminal domain. Interacts with tropomyosin. Interacts with FKBP4. Interacts with PPP5C (via TPR repeats); the interaction is calcium-dependent and modulates PPP5C activity. Interacts with TPPP; this interaction inhibits TPPP dimerization.

It localises to the nucleus envelope. It is found in the cytoplasm. The protein localises to the cell membrane. Its function is as follows. May function as calcium sensor and modulator, contributing to cellular calcium signaling. May function by interacting with other proteins, such as TPR-containing proteins, and indirectly play a role in many physiological processes such as the reorganization of the actin cytoskeleton and in cell motility. Binds 2 calcium ions. Calcium binding is cooperative. This Oryctolagus cuniculus (Rabbit) protein is Protein S100-A6 (S100A6).